An 85-amino-acid polypeptide reads, in one-letter code: Small ribosomal subunit protein uS17 (85 aa).

This sequence belongs to the universal ribosomal protein uS17 family. Part of the 30S ribosomal subunit.

One of the primary rRNA binding proteins, it binds specifically to the 5'-end of 16S ribosomal RNA. The polypeptide is Small ribosomal subunit protein uS17 (Desulforudis audaxviator (strain MP104C)).